A 599-amino-acid chain; its full sequence is Group II intron-encoded protein LtrA (599 aa).

In terms of domain architecture, Reverse transcriptase spans Ile70–Ile361. Residues Asn381–Ser549 form an intron maturase type-2 region.

It in the N-terminal section; belongs to the bacterial reverse transcriptase family. As to quaternary structure, homodimer. Requires Mg(2+) as cofactor.

It carries out the reaction DNA(n) + a 2'-deoxyribonucleoside 5'-triphosphate = DNA(n+1) + diphosphate. Functionally, multifunctional protein that promotes group II intron splicing and mobility by acting both on RNA and DNA. It has three activities: reverse transcriptase (RT) for intron duplication, maturase to promote splicing, and DNA endonuclease for site-specific cleavage of recipient alleles. The intron-encoded protein promotes splicing by facilitating the formation of the catalytically active structure of the intron RNA. After splicing, the protein remains bound to the excised intron lariat RNA, forming ribonucleoprotein particles, and cleaving the antisense strand of the recipient DNA in the 3' exon. After DNA cleavage, retrohoming occurs by a target DNA-primed reverse transcription of the intron RNA that had reverse spliced into the sense strand of the recipient DNA. It also contributes to the recognition of the DNA target site and acts as a repressor of its own translation. In Lactococcus lactis subsp. cremoris (Streptococcus cremoris), this protein is Group II intron-encoded protein LtrA (ltrA).